The chain runs to 262 residues: Hydroxyethylthiazole kinase (262 aa).

Position 50 (M50) interacts with substrate. The ATP site is built by R125 and T171. A substrate-binding site is contributed by G198.

The protein belongs to the Thz kinase family. Mg(2+) serves as cofactor.

The enzyme catalyses 5-(2-hydroxyethyl)-4-methylthiazole + ATP = 4-methyl-5-(2-phosphooxyethyl)-thiazole + ADP + H(+). The protein operates within cofactor biosynthesis; thiamine diphosphate biosynthesis; 4-methyl-5-(2-phosphoethyl)-thiazole from 5-(2-hydroxyethyl)-4-methylthiazole: step 1/1. Its function is as follows. Catalyzes the phosphorylation of the hydroxyl group of 4-methyl-5-beta-hydroxyethylthiazole (THZ). The chain is Hydroxyethylthiazole kinase from Escherichia coli O6:K15:H31 (strain 536 / UPEC).